A 99-amino-acid polypeptide reads, in one-letter code: Aspartyl/glutamyl-tRNA(Asn/Gln) amidotransferase subunit C (99 aa).

This sequence belongs to the GatC family. Heterotrimer of A, B and C subunits.

The enzyme catalyses L-glutamyl-tRNA(Gln) + L-glutamine + ATP + H2O = L-glutaminyl-tRNA(Gln) + L-glutamate + ADP + phosphate + H(+). It carries out the reaction L-aspartyl-tRNA(Asn) + L-glutamine + ATP + H2O = L-asparaginyl-tRNA(Asn) + L-glutamate + ADP + phosphate + 2 H(+). Functionally, allows the formation of correctly charged Asn-tRNA(Asn) or Gln-tRNA(Gln) through the transamidation of misacylated Asp-tRNA(Asn) or Glu-tRNA(Gln) in organisms which lack either or both of asparaginyl-tRNA or glutaminyl-tRNA synthetases. The reaction takes place in the presence of glutamine and ATP through an activated phospho-Asp-tRNA(Asn) or phospho-Glu-tRNA(Gln). The sequence is that of Aspartyl/glutamyl-tRNA(Asn/Gln) amidotransferase subunit C from Sulfurihydrogenibium sp. (strain YO3AOP1).